Here is a 168-residue protein sequence, read N- to C-terminus: CDP-archaeol synthase (168 aa).

5 consecutive transmembrane segments (helical) span residues 4–24 (IFEA…PVVL), 51–71 (GFFG…LMFP), 81–101 (VGVA…GSFI), 112–132 (PAVG…AYPL), and 138–158 (GEVL…NVFA).

This sequence belongs to the CDP-archaeol synthase family. Mg(2+) serves as cofactor.

It localises to the cell membrane. It carries out the reaction 2,3-bis-O-(geranylgeranyl)-sn-glycerol 1-phosphate + CTP + H(+) = CDP-2,3-bis-O-(geranylgeranyl)-sn-glycerol + diphosphate. It functions in the pathway membrane lipid metabolism; glycerophospholipid metabolism. In terms of biological role, catalyzes the formation of CDP-2,3-bis-(O-geranylgeranyl)-sn-glycerol (CDP-archaeol) from 2,3-bis-(O-geranylgeranyl)-sn-glycerol 1-phosphate (DGGGP) and CTP. This reaction is the third ether-bond-formation step in the biosynthesis of archaeal membrane lipids. The sequence is that of CDP-archaeol synthase from Pyrococcus abyssi (strain GE5 / Orsay).